Here is a 295-residue protein sequence, read N- to C-terminus: Hydroxylase/desaturase efuI (295 aa).

Belongs to the asaB hydroxylase/desaturase family.

It participates in secondary metabolite biosynthesis; terpenoid biosynthesis. Hydroxylase/desaturase; part of the gene cluster that mediates the biosynthesis of enfumafungin, a glycosylated fernene-type triterpenoid with potent antifungal activity, mediated by its interaction with beta-1,3-glucan synthase and the fungal cell wall. The pathway begins with the terpene cyclase-glycosyl transferase fusion protein that most likely uses 2,3-oxidosqualene as substrate and catalyzes glycosylation immediately after cyclization. The fernene glycoside then could be processed by the desaturase efuI which catalyzes isomerization of a double bond established by efuA to form the core structure. The latter would then undergo a series of hydroxylations in unknown order at C-2, C-19, C-23 and C-25, which would be catalyzed by two of the three cytochrome P450 monooxygenases efuB, efuG or efuH. The hydroxy-group at C-25 becomes oxidized by the dehydrogenase efuE to enable a spontaneous, non-enzymatic hemiacetal formation with C-23. After hydroxylation at C-2, acetylation by the acetyltransferase efuC takes place. The final steps in enfumafungin biosynthesis require expansion of the 5-membered ring by lactonization via a Baeyer-Villiger reaction mediated by one of the BGC's cytochrome P450 monooxygenases (efuB, efuG or efuH) followed by ring cleavage. This type of reaction would establish a double bond between C-20 and C-21 which could be reduced by the reductase efuL to form the final product. The chain is Hydroxylase/desaturase efuI from Hormonema carpetanum.